A 1401-amino-acid chain; its full sequence is MNQEIMNLFNPTTPAQVFDQIRISIASPEKILSWSYGEIKKPETINYRTFKPERDGLFCARIFGPIKDYECLCGKYKRMKYKGIICEKCSVEVTLSRVRRERMGHIELAAPVAHIWFLKSLPSRIGLLLDMTLKDLERILYFEYYVVLEPGLTALKDRQLLSEEEYLRAQDEYGQDSFTAMIGAEAIRELLKGLELEKLEASLRVEMQETESDIKHKKLAKRLKIVEAFRFSGNKPEWMILTVVPVIPPDLRPLVPLDGGRFATSDLNDLYRRVINRNNRLKRLMELRAPDIIIRNEKRMLQEAVDALFDNGRRGRVITGANKRPLKSLADMLKGKQGRFRQNLLGKRVDYSGRSVITVGPELRLHQCGLPKKMALELFKPFIYSRLDAKGLSTTVKQAKKLVEKERPEVWDILDEVIREHPILLNRAPTLHRLGIQAFEPVLIEGKAIQLHPLVCAAFNADFDGDQMAVHVPLSLEAQLEARVLMMSTNNILHPANGLPIIVPSQDIVLGLYYLSILREGLPGEGKLFGEAAEIEHALHAKVIHLHTKIKYRWEGLDENGKQVSRWYETTAGRTMLGQVLPKSVKMPFDVINKLMTKKEISGVIDQVYRHCGQKETVMFCDRIMALGFYNAFKAGISFGKDDMVVPASKWKTVEDTRTLAKEFEQQYNDGLITHGEKYNKVVDAWSKCTKKISEDMMTEISAVKKNPKGGEAQINSIFMMSNSGARGSQDQMRQLAGMRGLMAKPSGEIIETPIISNFKEGLSVLEYFNSTHGARKGLADTALKTANSGYLTRRLVDVAQDCIITADDCGTKLGIKMRAIIDAGTVVASLASRILGRTAGEDLRDPLTNKVVVKRGTLMEESHVDALQQAGIQEVKIRSALTCELVNGICGKCYGRDLARGTPVNHGEAVGVIAAQSIGEPGTQLTMRTFHIGGAAQINEQSFIESNFDGKVTIKNKAIAKNGEGHLVAMVRNMVVAVTDADGTERATHRIQYGARMRVDEGDMVKRGQRIAEWDPYTRPVLTEVEGIIGFEDLVEGQSISETLDESTGIAKRVVIDWRSQRGGADLRPAIVIKGKDGKILKLARGGEARYMLSVDAILSVDVGAKVKTGDILARISTESAKTRDITGGLPRVAELFEARKPKDAAIIAEISGTIRFGRDYKNKRRISIEPVDTTEETREYLIPKGKHIHLQDGDIVEKGDFIVEGNPAPHDILAIKGIEELAAYLVNEIQEVYRLQGVLINDKHIEVIVRQMLQKVEVTDQGETDMISGEQIDKIEFDQINAKAKEEGKKIATGTPVLLGITKASLQTRSFFSAASFQETTRVLTEAAVNGKVDPLEGLKENVIVGRLIPAGTGASMAKIREVAVKRDKLILDEREKQATIVPSAPEPEPLALPTPEQS.

Residues Cys-71, Cys-73, Cys-86, and Cys-89 each coordinate Zn(2+). Mg(2+)-binding residues include Asp-462, Asp-464, and Asp-466. Positions 810, 884, 891, and 894 each coordinate Zn(2+). A disordered region spans residues 1378 to 1401 (EKQATIVPSAPEPEPLALPTPEQS).

This sequence belongs to the RNA polymerase beta' chain family. The RNAP catalytic core consists of 2 alpha, 1 beta, 1 beta' and 1 omega subunit. When a sigma factor is associated with the core the holoenzyme is formed, which can initiate transcription. Mg(2+) is required as a cofactor. Requires Zn(2+) as cofactor.

The catalysed reaction is RNA(n) + a ribonucleoside 5'-triphosphate = RNA(n+1) + diphosphate. Its function is as follows. DNA-dependent RNA polymerase catalyzes the transcription of DNA into RNA using the four ribonucleoside triphosphates as substrates. The polypeptide is DNA-directed RNA polymerase subunit beta' (Rhodopseudomonas palustris (strain BisB18)).